The sequence spans 687 residues: Mu-like prophage FluMu transposase A (687 aa).

Residues 8–74 (THYSVYELAN…ELLLKTTPEQ (67 aa)) form the HTH Mu-type domain. Residues 398 to 417 (PIERAFSHGGLGDYVDKHLL) constitute a DNA-binding region (H-T-H motif).

In terms of biological role, this transposase is essential for integration, replication-transposition, and excision of Mu-like viral DNA. The sequence is that of Mu-like prophage FluMu transposase A from Haemophilus influenzae (strain ATCC 51907 / DSM 11121 / KW20 / Rd).